Reading from the N-terminus, the 314-residue chain is Glucocorticoid receptor (314 aa).

The segment at 1-44 (ASAAVSAAPTEKEFPKTHSDVSSEQQNLKGQKGSNGGSMKLHTT) is disordered. The modulating stretch occupies residues 1–281 (ASAAVSAAPT…SAATGPPPKL (281 aa)). Over residues 10–21 (TEKEFPKTHSDV) the composition is skewed to basic and acidic residues. Residues S65, S73, and S88 each carry the phosphoserine modification. K120 participates in a covalent cross-link: Glycyl lysine isopeptide (Lys-Gly) (interchain with G-Cter in SUMO2). The residue at position 129 (S129) is a Phosphoserine. Residues K139 and K155 each participate in a glycyl lysine isopeptide (Lys-Gly) (interchain with G-Cter in SUMO); alternate cross-link. Glycyl lysine isopeptide (Lys-Gly) (interchain with G-Cter in SUMO2); alternate cross-links involve residues K139 and K155. Position 266 is a phosphoserine (S266). A Glycyl lysine isopeptide (Lys-Gly) (interchain with G-Cter in ubiquitin) cross-link involves residue K280. An NR C4-type zinc finger spans residues 282 to 314 (CLVCSDEASGCHYGVLTCGSCKVFFKRAVEGQH). Residues 282–314 (CLVCSDEASGCHYGVLTCGSCKVFFKRAVEGQH) constitute a DNA-binding region (nuclear receptor).

The protein belongs to the nuclear hormone receptor family. NR3 subfamily. Heteromultimeric cytoplasmic complex with HSP90AA1, HSPA1A/HSPA1B, and FKBP5 or another immunophilin such as PPID, STIP1, or the immunophilin homolog PPP5C. Upon ligand binding FKBP5 dissociates from the complex and FKBP4 takes its place, thereby linking the complex to dynein and mediating transport to the nucleus, where the complex dissociates. Probably forms a complex composed of chaperones HSP90 and HSP70, co-chaperones CDC37, PPP5C, TSC1 and client protein TSC2, CDK4, AKT, RAF1 and NR3C1; this complex does not contain co-chaperones STIP1/HOP and PTGES3/p23. Directly interacts with UNC45A. Binds to DNA as a homodimer, and as heterodimer with NR3C2 or the retinoid X receptor. Binds STAT5A and STAT5B homodimers and heterodimers. Interacts with NRIP1, POU2F1, POU2F2 and TRIM28. Interacts with several coactivator complexes, including the SMARCA4 complex, CREBBP/EP300, TADA2L (Ada complex) and p160 coactivators such as NCOA2 and NCOA6. Interaction with BAG1 inhibits transactivation. Interacts with HEXIM1 and TGFB1I1. Interacts with NCOA1. Interacts with NCOA3, SMARCA4, SMARCC1, SMARCD1, and SMARCE1. Interacts with CLOCK, CRY1 and CRY2 in a ligand-dependent fashion. Interacts with CIART. Interacts with RWDD3. Interacts with UBE2I/UBC9 and this interaction is enhanced in the presence of RWDD3. Interacts with GRIP1. Interacts with NR4A3 (via nuclear receptor DNA-binding domain), represses transcription activity of NR4A3 on the POMC promoter Nur response element (NurRE). Directly interacts with PNRC2 to attract and form a complex with UPF1 and DCP1A; the interaction leads to rapid mRNA degradation. Interacts with GSK3B. Interacts with FNIP1 and FNIP2. Interacts (via C-terminus) with HNRNPU (via C-terminus). Interacts with MCM3AP. Interacts (via domain NR LBD) with HSP90AA1 and HSP90AB1. In the absence of hormonal ligand, interacts with TACC1. Interacts (via NR LBD domain) with ZNF764 (via KRAB domain); the interaction regulates transcription factor activity of NR3C1 by directing its actions toward certain biologic pathways. Acetylation by CLOCK reduces its binding to glucocorticoid response elements and its transcriptional activity. In terms of processing, increased proteasome-mediated degradation in response to glucocorticoids. Post-translationally, phosphorylated in the absence of hormone; becomes hyperphosphorylated in the presence of glucocorticoid. The Ser-65, Ser-88 and Ser-266-phosphorylated forms are mainly cytoplasmic, and the Ser-73-phosphorylated form is nuclear. Phosphorylation at Ser-73 increases transcriptional activity. Phosphorylation at Ser-65, Ser-88 and Ser-266 decreases signaling capacity. Phosphorylation at Ser-266 may protect from glucocorticoid-induced apoptosis. Phosphorylation at Ser-65 and Ser-73 is not required in regulation of chromosome segregation. May be dephosphorylated by PPP5C, attenuates NR3C1 action. Ubiquitinated by UBR5, leading to its degradation: UBR5 specifically recognizes and binds ligand-bound NR3C1 when it is not associated with coactivators (NCOAs). In presence of NCOAs, the UBR5-degron is not accessible, preventing its ubiquitination and degradation. In terms of processing, sumoylation at Lys-139 and Lys-155 negatively regulates its transcriptional activity. Heat shock increases sumoylation in a RWDD3-dependent manner.

The protein resides in the cytoplasm. It localises to the nucleus. Its subcellular location is the mitochondrion. The protein localises to the cytoskeleton. It is found in the spindle. The protein resides in the microtubule organizing center. It localises to the centrosome. Its subcellular location is the chromosome. The protein localises to the nucleoplasm. Receptor for glucocorticoids (GC). Has a dual mode of action: as a transcription factor that binds to glucocorticoid response elements (GRE), both for nuclear and mitochondrial DNA, and as a modulator of other transcription factors. Affects inflammatory responses, cellular proliferation and differentiation in target tissues. Involved in chromatin remodeling. Plays a role in rapid mRNA degradation by binding to the 5' UTR of target mRNAs and interacting with PNRC2 in a ligand-dependent manner which recruits the RNA helicase UPF1 and the mRNA-decapping enzyme DCP1A, leading to RNA decay. Could act as a coactivator for STAT5-dependent transcription upon growth hormone (GH) stimulation and could reveal an essential role of hepatic GR in the control of body growth. Mediates glucocorticoid-induced apoptosis. Promotes accurate chromosome segregation during mitosis. May act as a tumor suppressor. May play a negative role in adipogenesis through the regulation of lipolytic and antilipogenic gene expression. The polypeptide is Glucocorticoid receptor (NR3C1) (Ovis aries (Sheep)).